The chain runs to 614 residues: Sulfite reductase [NADPH] flavoprotein alpha-component (614 aa).

The region spanning 79-217 (LTIIFASQTG…AATEWRKQVL (139 aa)) is the Flavodoxin-like domain. FMN is bound by residues 85–90 (SQTGNA), 132–135 (STNG), and 168–177 (LGDSSYQFFC). In terms of domain architecture, FAD-binding FR-type spans 249–463 (EQPYTASLST…VEHNNNFKLP (215 aa)). Residues Thr337, Thr371, 401–404 (RLYS), 419–421 (TVG), Tyr425, and 434–437 (GGAS) contribute to the FAD site. NADP(+)-binding positions include 534-535 (SR), 540-544 (KVYVQ), and Asp576. FAD is bound at residue Tyr614.

The protein belongs to the NADPH-dependent sulphite reductase flavoprotein subunit CysJ family. It in the N-terminal section; belongs to the flavodoxin family. This sequence in the C-terminal section; belongs to the flavoprotein pyridine nucleotide cytochrome reductase family. As to quaternary structure, alpha(8)-beta(8). The alpha component is a flavoprotein, the beta component is a hemoprotein. Requires FAD as cofactor. FMN serves as cofactor.

It carries out the reaction hydrogen sulfide + 3 NADP(+) + 3 H2O = sulfite + 3 NADPH + 4 H(+). It participates in sulfur metabolism; hydrogen sulfide biosynthesis; hydrogen sulfide from sulfite (NADPH route): step 1/1. In terms of biological role, component of the sulfite reductase complex that catalyzes the 6-electron reduction of sulfite to sulfide. This is one of several activities required for the biosynthesis of L-cysteine from sulfate. The flavoprotein component catalyzes the electron flow from NADPH -&gt; FAD -&gt; FMN to the hemoprotein component. This Vibrio cholerae serotype O1 (strain ATCC 39315 / El Tor Inaba N16961) protein is Sulfite reductase [NADPH] flavoprotein alpha-component.